The primary structure comprises 806 residues: Plasminogen (806 aa).

The signal sequence occupies residues 1–19 (MEYGKVIFLFLLFLKSGQG). Positions 20–98 (ESLENYIKTE…RDVVLFEKRI (79 aa)) constitute a PAN domain. 21 disulfides stabilise this stretch: C49/C73, C53/C61, C103/C181, C124/C164, C152/C176, C185/C262, C188/C316, C206/C245, C234/C257, C275/C352, C296/C335, C324/C347, C371/C448, C392/C431, C420/C443, C476/C555, C497/C538, C526/C550, C563/C681, C573/C581, and C603/C619. Kringle domains follow at residues 102–181 (DCKS…VPEC), 184–262 (ECMH…IPRC), 274–352 (QCLK…IPSC), 370–448 (ECYE…LEKC), and 475–555 (DCMY…IPQC). One can recognise a Peptidase S1 domain in the interval 577–804 (IVGGCYAQPH…YISWIEDVMK (228 aa)). S593 is subject to Phosphoserine. Catalysis depends on charge relay system residues H618 and D661. A Phosphoserine modification is found at S684. 3 disulfides stabilise this stretch: C695/C762, C725/C741, and C752/C780. The Charge relay system role is filled by S756.

It belongs to the peptidase S1 family. Plasminogen subfamily. Interacts with CSPG4 and AMOT. Interacts (via the Kringle domains) with HRG; the interaction tethers PLG to the cell surface and enhances its activation. Interacts (via Kringle 4 domain) with ADA; the interaction stimulates PLG activation when in complex with DPP4. Angiostatin: Interacts with ATP5F1A; the interaction inhibits most of the angiogenic effects of angiostatin. Post-translationally, in the presence of the inhibitor, the activation involves only cleavage after Arg-576, yielding two chains held together by two disulfide bonds. In the absence of the inhibitor, the activation involves additionally the removal of the activation peptide.

It localises to the secreted. It carries out the reaction Preferential cleavage: Lys-|-Xaa &gt; Arg-|-Xaa, higher selectivity than trypsin. Converts fibrin into soluble products.. Converted into plasmin by plasminogen activators, both plasminogen and its activator being bound to fibrin. Activated with catalytic amounts of streptokinase. In terms of biological role, plasmin dissolves the fibrin of blood clots and acts as a proteolytic factor in a variety of other processes including embryonic development, tissue remodeling, tumor invasion, and inflammation. In ovulation, weakens the walls of the Graafian follicle. It activates the urokinase-type plasminogen activator, collagenases and several complement zymogens, such as C1, C4 and C5. Cleavage of fibronectin and laminin leads to cell detachment and apoptosis. Also cleaves fibrin, thrombospondin and von Willebrand factor. Its role in tissue remodeling and tumor invasion may be modulated by CSPG4. Binds to cells. This is Plasminogen (PLG) from Notamacropus eugenii (Tammar wallaby).